The primary structure comprises 370 residues: sn-glycerol-3-phosphate import ATP-binding protein UgpC (370 aa).

The region spanning 4–236 (LSLKNIAKRY…PATAFVAAFM (233 aa)) is the ABC transporter domain. An ATP-binding site is contributed by 38-45 (GPSGCGKS).

This sequence belongs to the ABC transporter superfamily. sn-glycerol-3-phosphate importer (TC 3.A.1.1.3) family. The complex is composed of two ATP-binding proteins (UgpC), two transmembrane proteins (UgpA and UgpE) and a solute-binding protein (UgpB).

It localises to the cell inner membrane. The catalysed reaction is sn-glycerol 3-phosphate(out) + ATP + H2O = sn-glycerol 3-phosphate(in) + ADP + phosphate + H(+). Functionally, part of the ABC transporter complex UgpBAEC involved in sn-glycerol-3-phosphate (G3P) import. Responsible for energy coupling to the transport system. The protein is sn-glycerol-3-phosphate import ATP-binding protein UgpC of Chromobacterium violaceum (strain ATCC 12472 / DSM 30191 / JCM 1249 / CCUG 213 / NBRC 12614 / NCIMB 9131 / NCTC 9757 / MK).